The primary structure comprises 335 residues: D-alanine--D-alanine ligase (335 aa).

Residues 124 to 330 (KMWFSALGVP…FTEYLSDVIS (207 aa)) form the ATP-grasp domain. Residue 154-209 (AFDTWGSVFIKAASQGSSVGCYKVDVRDNIAKVLEEAFGYAPYVVVEKTIKARELE) participates in ATP binding. Mg(2+)-binding residues include Asp284, Glu297, and Asn299.

This sequence belongs to the D-alanine--D-alanine ligase family. It depends on Mg(2+) as a cofactor. Requires Mn(2+) as cofactor.

The protein resides in the cytoplasm. It catalyses the reaction 2 D-alanine + ATP = D-alanyl-D-alanine + ADP + phosphate + H(+). Its pathway is cell wall biogenesis; peptidoglycan biosynthesis. Cell wall formation. The sequence is that of D-alanine--D-alanine ligase from Shewanella denitrificans (strain OS217 / ATCC BAA-1090 / DSM 15013).